Here is a 359-residue protein sequence, read N- to C-terminus: HTH-type transcriptional regulator Rv3575c (359 aa).

An HTH lacI-type domain is found at 9–64; that stretch reads ATLASLAAELKVSRTTVSNAFNRPDQLSADLRERVLATAKRLGYAGPDPVARSLRT. Residues 11 to 30 constitute a DNA-binding region (H-T-H motif); it reads LASLAAELKVSRTTVSNAFN.

Transcriptional regulator that negatively regulates transcription of the mce4 operon, which is involved in cholesterol transport and utilization. Acts by binding to the promoter region of the mce4 operon. It affects the utilization of host cholesterol as a carbon source, impacting the host's innate immune response. This Mycobacterium tuberculosis (strain ATCC 25618 / H37Rv) protein is HTH-type transcriptional regulator Rv3575c.